Consider the following 94-residue polypeptide: Copper resistance protein K (94 aa).

The first 20 residues, 1 to 20 (MKQKLMVGAFIAAVSLSAAA), serve as a signal peptide directing secretion.

Monomer in the copper-bound form. Homodimer as apoprotein. Dissociates into monomers upon copper binding.

It localises to the periplasm. Functionally, involved in resistance to copper. Can bind up to 2 copper ions. Has higher affinity for Cu(+) than for Cu(2+). The sequence is that of Copper resistance protein K (copK) from Cupriavidus metallidurans (strain ATCC 43123 / DSM 2839 / NBRC 102507 / CH34) (Ralstonia metallidurans).